The following is a 967-amino-acid chain: MQNAPKCYLPNSRKGRDVNFHDRGPETLKCLYDESEDNNNFTMHSESIGPKSLDSLSPRRLSNYSSAVDPRTTSLEDVPRLILTRSNSQEQTPLRTHTPVEYMSDSIHKSLADLQLGGSSYSVAESPVPVLQSSAVSEADDMASAHSAHPSRKASRSLRLFESSTSNNLETGNSTNTALHNVSSPLESVSERLSKSGSPSVGAQHDLDEVISEKDTSLSRRSSRGRSSAPKRRKDSGSSKTTATYIPHNPSKKSSQHLPLLPDASFELERSVSRSYQSPASTPRSSVSSVSSSPPEDHPFFHWNVDYPVTVRLEPFKHQVGGHTAFFRFSKRAVCKPLTRNENTFYETIEACHPELLPFIPKYIGVLNVTHTITKTEENDSTTEYVNTESSSKTPAPHKHTFNSCYQKKDYGYIPEVSVEQNRHIFPEWMLPDKRSHSYGSPKSLHHKSSSAGERPVSPTFVADIPPKTPWGTTLINRKLREEVLREVFAPKHARRRLGTRFHSRSSHRPSVFRDNSVAFGQLDNGNTSSRARDKDADPNKSLSCSVEDKHYDLHSAVAEENEEVDEELLNVPSNNQGKSYRRFSSDAVWEEPESNEFPRVSGTMEDYDSRESTGHTIKELRSTPNSHGTVPDDSIFAMDNEENSELPPPLEPAEIGDPFRSVNDPRRVLSLPHMASADEDHRIPASDNQNNNNNDANALAENSESQHSTQIERYIVIEDLTSGMKRPCVLDVKMGTRQYGIMATEKKKASQTKKCAMTTSRVLGVRICGMQVWHPWLQSYTFEDKYVGRDIKAGEEFQHALMRYLGKTDDDEDNSHLLVHHIPTIIRKLEQLEQIVRFLKGSRLYASSLLFLYDGEPPPSDKSSKEKVKPREIDIRIVDFANCVFAEDKELLAKATCPPQHKDTYDRGYVRGLRTLRLYFLKIWKEAKGMQIAERGYEDSLSNAYDELGGLMSYSNDDDSCGETST.

2 disordered regions span residues 1-23 and 41-72; these read MQNA…FHDR and FTMH…DPRT. Residues 14-23 are compositionally biased toward basic and acidic residues; the sequence is KGRDVNFHDR. The segment covering 60–72 has biased composition (polar residues); that stretch reads RLSNYSSAVDPRT. Ser-86 bears the Phosphoserine mark. Disordered stretches follow at residues 135–259, 271–296, 380–399, 437–464, and 499–544; these read AVSE…QHLP, SVSR…SPPE, DSTT…APHK, HSYG…FVAD, and GTRF…KSLS. Polar residues predominate over residues 162–187; it reads ESSTSNNLETGNSTNTALHNVSSPLE. Positions 205-218 are enriched in basic and acidic residues; sequence HDLDEVISEKDTSL. A compositionally biased stretch (basic residues) spans 221–234; the sequence is RSSRGRSSAPKRRK. Residues 278-294 are compositionally biased toward low complexity; it reads SPASTPRSSVSSVSSSP. Polar residues predominate over residues 382–394; sequence TTEYVNTESSSKT. Residues 499-508 show a composition bias toward basic residues; sequence GTRFHSRSSH. Position 585 is a phosphoserine (Ser-585). Disordered regions lie at residues 594 to 665 and 681 to 708; these read ESNE…SVND and DHRI…ESQH. Positions 608 to 622 are enriched in basic and acidic residues; that stretch reads YDSRESTGHTIKELR. The segment covering 686–704 has biased composition (low complexity); sequence ASDNQNNNNNDANALAENS. A substrate-binding site is contributed by 728–736; the sequence is PCVLDVKMG.

It belongs to the inositol phosphokinase (IPK) family.

The protein resides in the cytoplasm. This is an uncharacterized protein from Schizosaccharomyces pombe (strain 972 / ATCC 24843) (Fission yeast).